The chain runs to 148 residues: Probable 4-amino-4-deoxy-L-arabinose-phosphoundecaprenol flippase subunit ArnF (148 aa).

The Cytoplasmic segment spans residues 1-23 (MRGDNTGVGKEPAVTERPAIKGY). Residues 24–44 (LYVLGSILLVTLAQLAMKWGV) form a helical membrane-spanning segment. Over 45–63 (MQLPAWQASLDIMLAHPVP) the chain is Periplasmic. Residues 64–84 (LLVITAGVGCYALSLLCWLAA) form a helical membrane-spanning segment. The Cytoplasmic portion of the chain corresponds to 85-91 (LHFTPLN). A helical membrane pass occupies residues 92–112 (IAYPLLSTSYALVYLLAVSIP). At 113–117 (SFAEP) the chain is on the periplasmic side. A helical transmembrane segment spans residues 118 to 138 (LEPGKAVGVIFILLGAVLVGI). The Cytoplasmic portion of the chain corresponds to 139–148 (KPVGRKRNAH).

Belongs to the ArnF family. As to quaternary structure, heterodimer of ArnE and ArnF.

The protein resides in the cell inner membrane. The protein operates within bacterial outer membrane biogenesis; lipopolysaccharide biosynthesis. Translocates 4-amino-4-deoxy-L-arabinose-phosphoundecaprenol (alpha-L-Ara4N-phosphoundecaprenol) from the cytoplasmic to the periplasmic side of the inner membrane. The protein is Probable 4-amino-4-deoxy-L-arabinose-phosphoundecaprenol flippase subunit ArnF of Aeromonas salmonicida (strain A449).